The primary structure comprises 470 residues: Properdin (470 aa).

The first 26 residues, 1-26 (MTAPVQVPQSLLLLLMLLLTLPATGS), serve as a signal peptide directing secretion. TSP type-1 domains are found at residues 27 to 75 (DPVL…QACR), 76 to 133 (SPRW…QCCP), 135 to 190 (MGGW…QVCP), 192 to 254 (HGAW…PPCP), 256 to 312 (AGGW…VPCP), 314 to 376 (DGEW…QNCI), and 380 to 463 (KGSW…PACK). 3 cysteine pairs are disulfide-bonded: Cys-31–Cys-55, Cys-42–Cys-71, and Cys-56–Cys-74. 2 C-linked (Man) tryptophan glycosylation sites follow: Trp-82 and Trp-85. 7 disulfides stabilise this stretch: Cys-88/Cys-126, Cys-92/Cys-132, Cys-103/Cys-110, Cys-131/Cys-169, Cys-147/Cys-183, Cys-151/Cys-189, and Cys-162/Cys-173. Residues Trp-138, Trp-141, and Trp-144 are each glycosylated (C-linked (Man) tryptophan). An O-linked (Fuc...) threonine glycan is attached at Thr-150. 3 C-linked (Man) tryptophan glycosylation sites follow: Trp-195, Trp-198, and Trp-201. 3 disulfides stabilise this stretch: Cys-204–Cys-247, Cys-208–Cys-253, and Cys-223–Cys-237. O-linked (Fuc...) serine glycosylation occurs at Ser-207. Residues Trp-259 and Trp-262 are each glycosylated (C-linked (Man) tryptophan). 3 disulfides stabilise this stretch: Cys-268–Cys-305, Cys-272–Cys-311, and Cys-283–Cys-295. Thr-271 carries O-linked (Fuc...) threonine glycosylation. 2 C-linked (Man) tryptophan glycosylation sites follow: Trp-320 and Trp-323. 3 cysteine pairs are disulfide-bonded: Cys-326–Cys-369, Cys-336–Cys-375, and Cys-349–Cys-359. The segment at 350 to 358 (KGRKFNGQR) is interaction with Complement C3 beta chain. C-linked (Man) tryptophan glycosylation is found at Trp-383, Trp-386, and Trp-389. 3 disulfides stabilise this stretch: Cys-392–Cys-456, Cys-396–Cys-462, and Cys-408–Cys-440. Asn-429 carries an N-linked (GlcNAc...) asparagine glycan.

In plasma, properdin exists as dimers, trimers or tetramers in the relative proportions of 26:54:20. Interacts with the pro-C3-convertase enzyme complex (C3b-Bb) comprised of Complement C3 beta chain (C3b) and the Complement factor B Bb fragment (Bb), where it binds (via its TSP type-1 5 domain) with C3b and Bb. This interaction stabilizes the complex and allows it to become the active C3-convertase enzyme complex (C3b-Bb-FP). Interacts with C3b. Interacts with CFB.

It localises to the secreted. In terms of biological role, a positive regulator of the alternate pathway of complement. It binds to and stabilizes the C3- and C5-convertase enzyme complexes. Inhibits CFI-CFH mediated degradation of Inhibits CFI-CFH mediated degradation of Complement C3 beta chain (C3b). The sequence is that of Properdin (CFP) from Cavia porcellus (Guinea pig).